We begin with the raw amino-acid sequence, 250 residues long: 2,3-bisphosphoglycerate-dependent phosphoglycerate mutase (250 aa).

Residues R8–N15, T21–G22, R60, E87–Y90, K98, and R114–R115 contribute to the substrate site. Catalysis depends on H9, which acts as the Tele-phosphohistidine intermediate. E87 (proton donor/acceptor) is an active-site residue. Positions S116–D135 are disordered. A substrate-binding site is contributed by G183 to N184.

The protein belongs to the phosphoglycerate mutase family. BPG-dependent PGAM subfamily. Homodimer.

It catalyses the reaction (2R)-2-phosphoglycerate = (2R)-3-phosphoglycerate. Its pathway is carbohydrate degradation; glycolysis; pyruvate from D-glyceraldehyde 3-phosphate: step 3/5. Catalyzes the interconversion of 2-phosphoglycerate and 3-phosphoglycerate. This chain is 2,3-bisphosphoglycerate-dependent phosphoglycerate mutase, found in Polaromonas naphthalenivorans (strain CJ2).